Reading from the N-terminus, the 231-residue chain is Large ribosomal subunit protein uL1 (231 aa).

This sequence belongs to the universal ribosomal protein uL1 family. In terms of assembly, part of the 50S ribosomal subunit.

Binds directly to 23S rRNA. The L1 stalk is quite mobile in the ribosome, and is involved in E site tRNA release. In terms of biological role, protein L1 is also a translational repressor protein, it controls the translation of the L11 operon by binding to its mRNA. This chain is Large ribosomal subunit protein uL1, found in Dechloromonas aromatica (strain RCB).